We begin with the raw amino-acid sequence, 429 residues long: GTPase Obg (429 aa).

Residues 1-158 enclose the Obg domain; the sequence is MFADSAKIFI…LNVTLELKVI (158 aa). In terms of domain architecture, OBG-type G spans 159 to 333; it reads ADVGLVGFPN…LLYYVSDLLK (175 aa). GTP-binding positions include 165–172, 190–194, 212–215, 282–285, and 314–316; these read GFPNVGKS, FTTLN, DIPG, NKTD, and SAV. Ser172 and Thr192 together coordinate Mg(2+). An OCT domain is found at 350-429; that stretch reads ENLVMSEPYT…MYGLEFDYYK (80 aa).

This sequence belongs to the TRAFAC class OBG-HflX-like GTPase superfamily. OBG GTPase family. As to quaternary structure, monomer. The cofactor is Mg(2+).

Its subcellular location is the cytoplasm. In terms of biological role, an essential GTPase which binds GTP, GDP and possibly (p)ppGpp with moderate affinity, with high nucleotide exchange rates and a fairly low GTP hydrolysis rate. Plays a role in control of the cell cycle, stress response, ribosome biogenesis and in those bacteria that undergo differentiation, in morphogenesis control. The sequence is that of GTPase Obg from Lachnoclostridium phytofermentans (strain ATCC 700394 / DSM 18823 / ISDg) (Clostridium phytofermentans).